Consider the following 346-residue polypeptide: Holliday junction branch migration complex subunit RuvB (346 aa).

Positions 1–182 (MKIELLNTPA…FGISSRFDYY (182 aa)) are large ATPase domain (RuvB-L). ATP is bound by residues Ile21, Arg22, Gly63, Lys66, Thr67, Thr68, 129-131 (EDF), Arg172, Tyr182, and Arg219. Thr67 provides a ligand contact to Mg(2+). The tract at residues 183–253 (PPELLERIIL…IAMTTLASLE (71 aa)) is small ATPAse domain (RuvB-S). The segment at 256-346 (EEGLDDMDKK…GPLFDAAPAR (91 aa)) is head domain (RuvB-H). Arg311 and Arg316 together coordinate DNA.

The protein belongs to the RuvB family. In terms of assembly, homohexamer. Forms an RuvA(8)-RuvB(12)-Holliday junction (HJ) complex. HJ DNA is sandwiched between 2 RuvA tetramers; dsDNA enters through RuvA and exits via RuvB. An RuvB hexamer assembles on each DNA strand where it exits the tetramer. Each RuvB hexamer is contacted by two RuvA subunits (via domain III) on 2 adjacent RuvB subunits; this complex drives branch migration. In the full resolvosome a probable DNA-RuvA(4)-RuvB(12)-RuvC(2) complex forms which resolves the HJ.

It is found in the cytoplasm. The catalysed reaction is ATP + H2O = ADP + phosphate + H(+). The RuvA-RuvB-RuvC complex processes Holliday junction (HJ) DNA during genetic recombination and DNA repair, while the RuvA-RuvB complex plays an important role in the rescue of blocked DNA replication forks via replication fork reversal (RFR). RuvA specifically binds to HJ cruciform DNA, conferring on it an open structure. The RuvB hexamer acts as an ATP-dependent pump, pulling dsDNA into and through the RuvAB complex. RuvB forms 2 homohexamers on either side of HJ DNA bound by 1 or 2 RuvA tetramers; 4 subunits per hexamer contact DNA at a time. Coordinated motions by a converter formed by DNA-disengaged RuvB subunits stimulates ATP hydrolysis and nucleotide exchange. Immobilization of the converter enables RuvB to convert the ATP-contained energy into a lever motion, pulling 2 nucleotides of DNA out of the RuvA tetramer per ATP hydrolyzed, thus driving DNA branch migration. The RuvB motors rotate together with the DNA substrate, which together with the progressing nucleotide cycle form the mechanistic basis for DNA recombination by continuous HJ branch migration. Branch migration allows RuvC to scan DNA until it finds its consensus sequence, where it cleaves and resolves cruciform DNA. The polypeptide is Holliday junction branch migration complex subunit RuvB (Chlorobium phaeobacteroides (strain DSM 266 / SMG 266 / 2430)).